The sequence spans 481 residues: Squalene epoxidase erg1 (481 aa).

The chain crosses the membrane as a helical span at residues 28–48; that stretch reads HADVVIIGAGVLGCALAVALG. FAD contacts are provided by residues 38-39, 58-59, Arg-66, and Arg-138; these read VL and EA. Asn-146 is a glycosylation site (N-linked (GlcNAc...) asparagine). FAD-binding residues include Asp-319 and Met-332. 2 helical membrane passes run 425-445 and 452-472; these read KPSVLFVHFFSVALLSLWVLL and LFPVALFKCIMTFWTACVVIF.

This sequence belongs to the squalene monooxygenase family. Requires FAD as cofactor.

The protein localises to the endoplasmic reticulum membrane. It is found in the microsome membrane. The catalysed reaction is squalene + reduced [NADPH--hemoprotein reductase] + O2 = (S)-2,3-epoxysqualene + oxidized [NADPH--hemoprotein reductase] + H2O + H(+). It functions in the pathway steroid metabolism; ergosterol biosynthesis. In terms of biological role, squalene epoxidase; part of the third module of ergosterol biosynthesis pathway that includes the late steps of the pathway. Erg1 catalyzes the epoxidation of squalene into 2,3-epoxysqualene. The third module or late pathway involves the ergosterol synthesis itself through consecutive reactions that mainly occur in the endoplasmic reticulum (ER) membrane. Firstly, the squalene synthase erg9 catalyzes the condensation of 2 farnesyl pyrophosphate moieties to form squalene, which is the precursor of all steroids. Squalene synthase is crucial for balancing the incorporation of farnesyl diphosphate (FPP) into sterol and nonsterol isoprene synthesis. Secondly, squalene is converted into lanosterol by the consecutive action of the squalene epoxidase erg1 and the lanosterol synthase erg7. Then, the delta(24)-sterol C-methyltransferase erg6 methylates lanosterol at C-24 to produce eburicol. Eburicol is the substrate of the sterol 14-alpha demethylase encoded by cyp51A and cyp51B, to yield 4,4,24-trimethyl ergosta-8,14,24(28)-trienol. The C-14 reductase erg24 then reduces the C14=C15 double bond which leads to 4,4-dimethylfecosterol. A sequence of further demethylations at C-4, involving the C-4 demethylation complex containing the C-4 methylsterol oxidases erg25A or erg25B, the sterol-4-alpha-carboxylate 3-dehydrogenase erg26 and the 3-keto-steroid reductase erg27, leads to the production of fecosterol via 4-methylfecosterol. The C-8 sterol isomerase erg2 then catalyzes the reaction which results in unsaturation at C-7 in the B ring of sterols and thus converts fecosterol to episterol. The sterol-C5-desaturase erg3B then catalyzes the introduction of a C-5 double bond in the B ring to produce 5-dehydroepisterol. The 2 other sterol-C5-desaturases, erg3A and erg3C, seem to be less important in ergosterol biosynthesis. The C-22 sterol desaturase erg5 further converts 5-dehydroepisterol into ergosta-5,7,22,24(28)-tetraen-3beta-ol by forming the C-22(23) double bond in the sterol side chain. Finally, ergosta-5,7,22,24(28)-tetraen-3beta-ol is substrate of the C-24(28) sterol reductases erg4A and erg4B to produce ergosterol. Possible alternative sterol biosynthetic pathways might exist from fecosterol to ergosterol, depending on the activities of the erg3 isoforms. The polypeptide is Squalene epoxidase erg1 (Aspergillus fumigatus (strain ATCC MYA-4609 / CBS 101355 / FGSC A1100 / Af293) (Neosartorya fumigata)).